A 38-amino-acid chain; its full sequence is Phi-Lf prophage-derived putative minor coat protein (38 aa).

The sequence is that of Phi-Lf prophage-derived putative minor coat protein (gIX-1) from Xanthomonas campestris pv. campestris (strain ATCC 33913 / DSM 3586 / NCPPB 528 / LMG 568 / P 25).